The following is a 432-amino-acid chain: Neuronal pentraxin-1 (432 aa).

A signal peptide spans 1 to 22; it reads MPAGRAARTCALLALCLLGAGA. The disordered stretch occupies residues 90-122; sequence ESQSTLDPGAGEARAGGGRKQPGSGKNTMGDLS. 2 N-linked (GlcNAc...) asparagine glycosylation sites follow: Asn154 and Asn193. The Pentraxin (PTX) domain maps to 226–428; it reads DKFQLTFPLR…GATKWTFEAC (203 aa). The cysteines at positions 256 and 316 are disulfide-linked. The Ca(2+) site is built by Asn280, Glu358, Gln359, Asp360, and Gln370.

As to quaternary structure, homooligomer or heterooligomer (probably pentamer) with neuronal pentraxin receptor (NPTXR). The cofactor is Ca(2+).

It localises to the secreted. The protein resides in the cytoplasmic vesicle. Its subcellular location is the secretory vesicle. The protein localises to the endoplasmic reticulum. May be involved in mediating uptake of synaptic material during synapse remodeling or in mediating the synaptic clustering of AMPA glutamate receptors at a subset of excitatory synapses. In Homo sapiens (Human), this protein is Neuronal pentraxin-1 (NPTX1).